The chain runs to 1581 residues: Spike glycoprotein (1581 aa).

An N-terminal signal peptide occupies residues 1-20 (MFLCFCAATVLCFWINSGGA). Topologically, residues 21–1551 (DVVPNGTLIF…YNLLPTWITW (1531 aa)) are virion surface. 17 N-linked (GlcNAc...) asparagine; by host glycosylation sites follow: asparagine 25, asparagine 384, asparagine 494, asparagine 574, asparagine 935, asparagine 969, asparagine 1267, asparagine 1297, asparagine 1385, asparagine 1389, asparagine 1428, asparagine 1431, asparagine 1438, asparagine 1483, asparagine 1487, asparagine 1495, and asparagine 1515. Residues 1552 to 1572 (LTLGFSLFSIVISGINIILFF) form a helical membrane-spanning segment. Residues 1573-1581 (EMNGKVKKS) lie on the Intravirion side of the membrane.

It belongs to the toroviruses spike protein family. Homotrimer.

It localises to the virion membrane. Functionally, mediates the binding of virions to the host cell receptor and is involved in membrane fusion. The chain is Spike glycoprotein (S) from Berne virus (BEV).